The primary structure comprises 359 residues: Histamine H2 receptor (359 aa).

Over 1-22 the chain is Extracellular; that stretch reads MAFNGTVPSFCMDFTVYKVTIS. Asn-4 carries an N-linked (GlcNAc...) asparagine glycan. Residues 23–44 traverse the membrane as a helical segment; that stretch reads VILIILILVTVAGNVVVCLAVG. Residues 45–57 lie on the Cytoplasmic side of the membrane; sequence LNRRLRSLTNCFI. A helical transmembrane segment spans residues 58–81; it reads VSLAVTDLLLGLLVLPFSAIYQLS. The Extracellular segment spans residues 82 to 92; it reads CKWSFSKVFCN. Cysteines 91 and 174 form a disulfide. Residues 93–114 traverse the membrane as a helical segment; sequence IYTSLDVMLCTASILNLFMISL. The Cytoplasmic segment spans residues 115–134; sequence DRYCAVTDPLRYPVLITPAR. The chain crosses the membrane as a helical span at residues 135–159; the sequence is VAISLVFIWVISITLSFLSIHLGWN. The Extracellular segment spans residues 160–180; the sequence is SRNETSKDNDTIVKCKVQVNE. A helical membrane pass occupies residues 181–204; it reads VYGLVDGLVTFYLPLLIMCITYFR. Over 205-234 the chain is Cytoplasmic; it reads IFKIAREQARRINHIGSWKAATIREHKATV. Residues 235–258 traverse the membrane as a helical segment; it reads TLAAVMGAFIICWFPYFTVFVYRG. The Extracellular portion of the chain corresponds to 259-267; sequence LKGDDAVNE. A helical transmembrane segment spans residues 268–289; sequence VFEDVVLWLGYANSALNPILYA. Topologically, residues 290-359 are cytoplasmic; sequence ALNRDFRTAY…VTAPQGATNR (70 aa). Cys-305 carries S-palmitoyl cysteine lipidation.

Belongs to the G-protein coupled receptor 1 family.

The protein resides in the cell membrane. Its function is as follows. The H2 subclass of histamine receptors mediates gastric acid secretion. The activity of this receptor is mediated by G proteins which activate adenylyl cyclase. This chain is Histamine H2 receptor (HRH2), found in Cavia porcellus (Guinea pig).